The chain runs to 74 residues: Cytochrome c oxidase copper chaperone 1 (74 aa).

The interval 1–30 is disordered; it reads MTDQPAQNGLIPPPTSEPSKAAASAETKPK. Residues C34 and C35 each coordinate Cu cation. One can recognise a CHCH domain in the interval 34-74; sequence CCACPDTKKLRDECIVEHGESACTKWIEAHKICLRAEGFNV. 2 consecutive short sequence motifs (cx9C motif) follow at residues 37 to 47 and 56 to 66; these read CPDTKKLRDEC and CTKWIEAHKIC. Disulfide bonds link C37–C66 and C47–C56.

It belongs to the COX17 family.

It is found in the mitochondrion intermembrane space. Its function is as follows. Copper chaperone for cytochrome c oxidase (COX). Binds 2 copper ions and delivers them to the Cu(A) site of COX. Can complement the yeast mutant cox17. The sequence is that of Cytochrome c oxidase copper chaperone 1 (COX17-1) from Arabidopsis thaliana (Mouse-ear cress).